Here is a 399-residue protein sequence, read N- to C-terminus: Chalcone synthase 2 (399 aa).

The active site involves Cys166.

Belongs to the thiolase-like superfamily. Chalcone/stilbene synthases family.

The enzyme catalyses (E)-4-coumaroyl-CoA + 3 malonyl-CoA + 3 H(+) = 2',4,4',6'-tetrahydroxychalcone + 3 CO2 + 4 CoA. The protein operates within secondary metabolite biosynthesis; flavonoid biosynthesis. Functionally, the primary product of this enzyme is 4,2',4',6'-tetrahydroxychalcone (also termed naringenin-chalcone or chalcone) which can under specific conditions spontaneously isomerize into naringenin. Substrate preference is feruloyl-CoA = caffeoyl-CoA &gt;&gt; cinnamoyl-CoA. The chain is Chalcone synthase 2 (CHS2) from Hordeum vulgare (Barley).